Here is a 570-residue protein sequence, read N- to C-terminus: Hydroxylamine reductase (570 aa).

Cysteine 5, cysteine 8, cysteine 17, and cysteine 23 together coordinate [4Fe-4S] cluster. Residues histidine 266, glutamate 290, cysteine 334, cysteine 425, cysteine 453, cysteine 478, glutamate 513, and lysine 515 each coordinate hybrid [4Fe-2O-2S] cluster. The residue at position 425 (cysteine 425) is a Cysteine persulfide.

It belongs to the HCP family. [4Fe-4S] cluster is required as a cofactor. Requires hybrid [4Fe-2O-2S] cluster as cofactor.

The protein resides in the cytoplasm. It carries out the reaction A + NH4(+) + H2O = hydroxylamine + AH2 + H(+). Its function is as follows. Catalyzes the reduction of hydroxylamine to form NH(3) and H(2)O. This chain is Hydroxylamine reductase, found in Clostridium botulinum (strain Langeland / NCTC 10281 / Type F).